A 992-amino-acid chain; its full sequence is ATP-dependent DNA helicase PIF7 (992 aa).

The transit peptide at 1 to 21 directs the protein to the mitochondrion; that stretch reads MWDGPLRSRQNLRTVAKLRSS. Disordered stretches follow at residues 20-43, 145-182, and 190-209; these read SSGC…GETA, TVNK…TAAS, and LDSS…AVTQ. Polar residues-rich tracts occupy residues 23–43, 173–182, and 191–208; these read CPLT…GETA, NVDNTTTAAS, and DSSS…QAVT. 237 to 244 is a binding site for ATP; that stretch reads GGAGTGKS. Residues 651–670 mediate DNA binding; sequence QAYVALSRCTDVANLVIENF.

This sequence belongs to the helicase family. PIF1 subfamily. As to quaternary structure, monomer. It depends on Mg(2+) as a cofactor.

The protein localises to the mitochondrion matrix. Its subcellular location is the kinetoplast. It catalyses the reaction Couples ATP hydrolysis with the unwinding of duplex DNA at the replication fork by translocating in the 5'-3' direction. This creates two antiparallel DNA single strands (ssDNA). The leading ssDNA polymer is the template for DNA polymerase III holoenzyme which synthesizes a continuous strand.. The enzyme catalyses ATP + H2O = ADP + phosphate + H(+). In terms of biological role, DNA-dependent ATPase and 5'-3' DNA helicase required for the maintenance of mitochondrial (kinetoplast) genome stability. The chain is ATP-dependent DNA helicase PIF7 from Trypanosoma brucei brucei (strain 927/4 GUTat10.1).